Here is a 542-residue protein sequence, read N- to C-terminus: Doublesex- and mab-3-related transcription factor A2 (542 aa).

A DNA-binding region (DM) is located at residues 70 to 117 (CARCRNHGVVSALKGHKRYCRWKDCLCAKCTLIAERQRVMAAQVALRR). A disordered region spans residues 201-316 (LQAGRPGSPL…GGSGPRQRTP (116 aa)). The region spanning 314–349 (RTPLDILTRVFPGHRRGVLELVLQGCGGDVVQAIEQ) is the DMA domain.

This sequence belongs to the DMRT family. Expressed in testis.

The protein localises to the nucleus. In terms of biological role, may be involved in sexual development. This is Doublesex- and mab-3-related transcription factor A2 (DMRTA2) from Homo sapiens (Human).